A 162-amino-acid polypeptide reads, in one-letter code: Endoribonuclease YbeY (162 aa).

The Zn(2+) site is built by H128, H132, and H138.

Belongs to the endoribonuclease YbeY family. Requires Zn(2+) as cofactor.

It localises to the cytoplasm. Its function is as follows. Single strand-specific metallo-endoribonuclease involved in late-stage 70S ribosome quality control and in maturation of the 3' terminus of the 16S rRNA. The polypeptide is Endoribonuclease YbeY (Lactococcus lactis subsp. lactis (strain IL1403) (Streptococcus lactis)).